A 603-amino-acid chain; its full sequence is Chaperone protein DnaK (603 aa).

Threonine 175 carries the post-translational modification Phosphothreonine; by autocatalysis. Positions 573-586 (AQQAQQQNPDNQNN) are enriched in low complexity. Residues 573 to 603 (AQQAQQQNPDNQNNNKDDVTEATVTDDSTKK) are disordered. Over residues 594–603 (ATVTDDSTKK) the composition is skewed to polar residues.

Belongs to the heat shock protein 70 family.

Its function is as follows. Acts as a chaperone. This is Chaperone protein DnaK from Ureaplasma parvum serovar 3 (strain ATCC 27815 / 27 / NCTC 11736).